The primary structure comprises 270 residues: MSRIQTRFAALKKEGRGALIPYLQACDPDYDTSLELLRAMPAAGADLIEIGVPFSDPSADGPTIQAAALRGLKAGATLGRVLEMVRAFRETDNETPIVLMGYLNPIDSYGPAEFCFDAAQAGVDGIIVVDMPTEEADLLDAHAREADLDIISLVAPTTSNSRLFHVLREASGFVYYVSITGITGTNSASAADLEKALPRIREATSLPVAIGFGISTPEQARTASRIGDAAVVASALIKTMASTLENGQATERTVPAVLKQLEGLAAAVRA.

Active-site proton acceptor residues include Glu-49 and Asp-60.

It belongs to the TrpA family. As to quaternary structure, tetramer of two alpha and two beta chains.

It catalyses the reaction (1S,2R)-1-C-(indol-3-yl)glycerol 3-phosphate + L-serine = D-glyceraldehyde 3-phosphate + L-tryptophan + H2O. It participates in amino-acid biosynthesis; L-tryptophan biosynthesis; L-tryptophan from chorismate: step 5/5. The alpha subunit is responsible for the aldol cleavage of indoleglycerol phosphate to indole and glyceraldehyde 3-phosphate. In Gluconobacter oxydans (strain 621H) (Gluconobacter suboxydans), this protein is Tryptophan synthase alpha chain.